Consider the following 295-residue polypeptide: Glycine--tRNA ligase alpha subunit (295 aa).

It belongs to the class-II aminoacyl-tRNA synthetase family. As to quaternary structure, tetramer of two alpha and two beta subunits.

Its subcellular location is the cytoplasm. It catalyses the reaction tRNA(Gly) + glycine + ATP = glycyl-tRNA(Gly) + AMP + diphosphate. This is Glycine--tRNA ligase alpha subunit from Bacillus licheniformis (strain ATCC 14580 / DSM 13 / JCM 2505 / CCUG 7422 / NBRC 12200 / NCIMB 9375 / NCTC 10341 / NRRL NRS-1264 / Gibson 46).